A 133-amino-acid chain; its full sequence is ATP synthase epsilon chain (133 aa).

This sequence belongs to the ATPase epsilon chain family. F-type ATPases have 2 components, CF(1) - the catalytic core - and CF(0) - the membrane proton channel. CF(1) has five subunits: alpha(3), beta(3), gamma(1), delta(1), epsilon(1). CF(0) has three main subunits: a, b and c.

The protein resides in the cell membrane. Functionally, produces ATP from ADP in the presence of a proton gradient across the membrane. This is ATP synthase epsilon chain from Bacillus cytotoxicus (strain DSM 22905 / CIP 110041 / 391-98 / NVH 391-98).